The sequence spans 136 residues: Peptide methionine sulfoxide reductase MsrB (136 aa).

Residues 13–135 (ENDWRSKLTP…NSASLDFKDK (123 aa)) enclose the MsrB domain. Positions 52, 55, 101, and 104 each coordinate Zn(2+). The active-site Nucleophile is the C124.

This sequence belongs to the MsrB Met sulfoxide reductase family. The cofactor is Zn(2+).

The enzyme catalyses L-methionyl-[protein] + [thioredoxin]-disulfide + H2O = L-methionyl-(R)-S-oxide-[protein] + [thioredoxin]-dithiol. In Synechococcus sp. (strain RCC307), this protein is Peptide methionine sulfoxide reductase MsrB.